The chain runs to 383 residues: L-lactate dehydrogenase (383 aa).

In terms of domain architecture, FMN hydroxy acid dehydrogenase spans 1–380 (MIISSGNDYR…NADCLVQAIK (380 aa)). Y24 provides a ligand contact to substrate. Positions 106 and 127 each coordinate FMN. Substrate is bound at residue Y129. T155 contacts FMN. R164 is a substrate binding site. K251 serves as a coordination point for FMN. Residue H275 is the Proton acceptor of the active site. R278 lines the substrate pocket. Residue 306-330 (DSGIRNGLDVVRMLALGADTVLLGR) participates in FMN binding.

The protein belongs to the FMN-dependent alpha-hydroxy acid dehydrogenase family. Requires FMN as cofactor.

The protein localises to the cell inner membrane. It carries out the reaction (S)-lactate + A = pyruvate + AH2. Its function is as follows. Catalyzes the conversion of L-lactate to pyruvate. Is coupled to the respiratory chain. The chain is L-lactate dehydrogenase from Acinetobacter baumannii (strain AB307-0294).